Here is a 351-residue protein sequence, read N- to C-terminus: UDP-N-acetylglucosamine transporter slc35b4 (351 aa).

10 helical membrane passes run 6 to 26 (LISLIPISMIMVGCCSNVISL), 37 to 57 (AILVTFFQFATVAFISFFVNI), 77 to 97 (IPLKTYFLMVSIFFILSVLNN), 104 to 124 (IPIPFHMIFRSSSLLSTIVIG), 136 to 156 (QILSLIMVTLGIIFATFSSMP), 173 to 193 (FSIGMLMLIAAMFLSSILGLI), 209 to 229 (TIFYSHLFSLPFFLLFKDDIL), 252 to 274 (TLWVYLIVNVLTQYVCIQGVFIL), 282 to 302 (TCTLVISIRKFLSIIISVIYF), and 306 to 326 (FTSLLFTGTILVFLGTFMYST).

The protein belongs to the nucleotide-sugar transporter family. SLC35B subfamily.

It is found in the golgi apparatus membrane. Functionally, sugar transporter that specifically mediates the transport of UDP-N-acetylglucosamine (UDP-GlcNAc) from cytosol into Golgi. The protein is UDP-N-acetylglucosamine transporter slc35b4 (slc35b4) of Dictyostelium discoideum (Social amoeba).